The primary structure comprises 220 residues: MEEDEFIGEKTFQRYCAEFIKHSQQIGDSWEWRPSKDCSDGYMCKIHFQIKNGSVMSHLGASTHGQTCLPMEEAFELPLDDCEVIETAAASEVIKYEYHVLYSCSYQVPVLYFRASFLDGRPLTLKDIWEGVHECYKMRLLQGPWDTITQQEHPILGQPFFVLHPCKTNEFMTPVLKNSQKINKNVNYITSWLSIVGPVVGLNLPLSYAKATSQDERNVP.

Cys-166 functions as the Glycyl thioester intermediate in the catalytic mechanism.

Belongs to the ATG10 family. As to quaternary structure, interacts with MAP1LC3A. By interacting with MAP1LC3A, it plays a role in the conjugation of ATG12 to ATG5. Also able to directly interact either with ATG5 or ATG7. Interacts with IRGM.

The protein localises to the cytoplasm. E2-like enzyme involved in autophagy. Acts as an E2-like enzyme that catalyzes the conjugation of ATG12 to ATG5. ATG12 conjugation to ATG5 is required for autophagy. Likely serves as an ATG5-recognition molecule. Not involved in ATG12 conjugation to ATG3. Plays a role in adenovirus-mediated cell lysis. The polypeptide is Ubiquitin-like-conjugating enzyme ATG10 (ATG10) (Homo sapiens (Human)).